A 305-amino-acid polypeptide reads, in one-letter code: Acetaldehyde dehydrogenase (305 aa).

S12–I15 contributes to the NAD(+) binding site. Catalysis depends on C127, which acts as the Acyl-thioester intermediate. NAD(+)-binding positions include S158 to N166 and N277.

Belongs to the acetaldehyde dehydrogenase family.

The catalysed reaction is acetaldehyde + NAD(+) + CoA = acetyl-CoA + NADH + H(+). In Mycolicibacterium paratuberculosis (strain ATCC BAA-968 / K-10) (Mycobacterium paratuberculosis), this protein is Acetaldehyde dehydrogenase.